The primary structure comprises 431 residues: MSTIVSVWAREILDSRGNPTVEVEVSLESGHSGRAAVPSGASTGSREALELRDGDKGRYLGKGVEKAVDNVMGEIAENIVGMDALRQVAVDNALIDLDGTDNKDRLGANAMLGVSLATARAAANFIGMPLYQYLGGINSKVLPVPMMNIINGGEHAPNNLDIQEFMIMPVGAPTFSEALRMGAEIFHNLKALLAADGHVTSVGDEGGFAPNLKSHDEAFRYIMRAIETAGYIPGSEVALAIDAAASEFYKDGKYHLKGENKVLSSSEMIDWLMDFTQRYPLISIEDGMAEGDWEGWQEMTVKMGDSVQIVGDDVFVTNPDILAQGIDEGVANSILIKLNQIGTLTETLDTVEMAKGAGYTTVISHRSGETEDHFIADLAVALNAGQIKTGSLCRSDRLAKYNQLLRIEEDLDDEGIYFGPYMASHFGLGEE.

Residues Leu27–Glu47 are disordered. Position 163 (Gln163) interacts with (2R)-2-phosphoglycerate. Residue Glu205 is the Proton donor of the active site. Positions 242, 285, and 312 each coordinate Mg(2+). (2R)-2-phosphoglycerate is bound by residues Lys337, Arg366, Ser367, and Lys388. Lys337 acts as the Proton acceptor in catalysis.

This sequence belongs to the enolase family. Mg(2+) is required as a cofactor.

The protein localises to the cytoplasm. It is found in the secreted. The protein resides in the cell surface. The catalysed reaction is (2R)-2-phosphoglycerate = phosphoenolpyruvate + H2O. It functions in the pathway carbohydrate degradation; glycolysis; pyruvate from D-glyceraldehyde 3-phosphate: step 4/5. Its function is as follows. Catalyzes the reversible conversion of 2-phosphoglycerate (2-PG) into phosphoenolpyruvate (PEP). It is essential for the degradation of carbohydrates via glycolysis. The sequence is that of Enolase from Oleidesulfovibrio alaskensis (strain ATCC BAA-1058 / DSM 17464 / G20) (Desulfovibrio alaskensis).